The sequence spans 342 residues: Polygalacturonase inhibitor 2 (342 aa).

Positions 1-29 (MTQFNIPVTMSSSLSIILVILVSLSTAHS) are cleaved as a signal peptide. 2 disulfide bridges follow: C32-C62 and C63-C72. N64 carries an N-linked (GlcNAc...) (complex) asparagine glycan. LRR repeat units lie at residues 82-107 (NNLDLSGLNLPKPYPIPSSLANLPYL), 108-132 (NFLYIGGINNLVGPIPPAIAKLTQL), 133-156 (HYLYITHTNVSGAIPDFLSQIKTL), 157-180 (VTLDFSYNALSGTLPPSISSLPNL), 181-205 (VGITFDGNRISGAIPDSYGSFSKLF), 206-228 (TSMTISRNRLTGKIPPTFANLNL), 229-252 (AFVDLSRNMLEGDASVLFGSDKNT), 253-275 (QKIHLAKNSLAFDLGKVGLSKNL), 276-299 (NGLDLRNNRIYGTLPQGLTQLKFL), and 300-319 (HSLNVSFNNLCGEIPQGGNL). N141 carries N-linked (GlcNAc...) (complex) asparagine glycosylation. N303 carries an N-linked (GlcNAc...) asparagine glycan. 2 disulfides stabilise this stretch: C310–C332 and C334–C341.

This sequence belongs to the polygalacturonase-inhibiting protein family. Asn-303 is not glycosylated.

The protein resides in the secreted. It is found in the cell wall. Its subcellular location is the membrane. Its function is as follows. Inhibitor of fungal polygalacturonase. It is an important factor for plant resistance to phytopathogenic fungi. Inhibits all polygalacturonases (PG) tested, with the exception of PG from F.oxysporum which was only inhibited at 60%. This Phaseolus vulgaris (Kidney bean) protein is Polygalacturonase inhibitor 2 (PGIP2).